The chain runs to 360 residues: Photosystem II protein D1 1 (360 aa).

3 consecutive transmembrane segments (helical) span residues 29 to 46 (YIGWFGVLMIPTLLTATT), 118 to 133 (HFLIGIFCYLGRQWEL), and 142 to 156 (WICVAYSAPVAAATA). Histidine 118 is a binding site for chlorophyll a. Position 126 (tyrosine 126) interacts with pheophytin a. Aspartate 170 and glutamate 189 together coordinate [CaMn4O5] cluster. Residues 197–218 (FHMLGVAGVFGGALFAAMHGSL) traverse the membrane as a helical segment. Histidine 198 is a binding site for chlorophyll a. A quinone is bound by residues histidine 215 and 264–265 (SF). Histidine 215 contributes to the Fe cation binding site. Histidine 272 contributes to the Fe cation binding site. A helical transmembrane segment spans residues 274–288 (FLGAWPVVGIWFAAL). Residues histidine 332, glutamate 333, aspartate 342, and alanine 344 each coordinate [CaMn4O5] cluster. A propeptide spanning residues 345–360 (SGDAQMVALNAPAIEG) is cleaved from the precursor.

The protein belongs to the reaction center PufL/M/PsbA/D family. PSII is composed of 1 copy each of membrane proteins PsbA, PsbB, PsbC, PsbD, PsbE, PsbF, PsbH, PsbI, PsbJ, PsbK, PsbL, PsbM, PsbT, PsbX, PsbY, PsbZ, Psb30/Ycf12, peripheral proteins PsbO, CyanoQ (PsbQ), PsbU, PsbV and a large number of cofactors. It forms dimeric complexes. The D1/D2 heterodimer binds P680, chlorophylls that are the primary electron donor of PSII, and subsequent electron acceptors. It shares a non-heme iron and each subunit binds pheophytin, quinone, additional chlorophylls, carotenoids and lipids. D1 provides most of the ligands for the Mn4-Ca-O5 cluster of the oxygen-evolving complex (OEC). There is also a Cl(-1) ion associated with D1 and D2, which is required for oxygen evolution. The PSII complex binds additional chlorophylls, carotenoids and specific lipids. is required as a cofactor. Post-translationally, C-terminally processed by CtpA; processing is essential to allow assembly of the oxygen-evolving complex and photosynthetic growth. Tyr-161 forms a radical intermediate that is referred to as redox-active TyrZ, YZ or Y-Z. In terms of processing, C-terminally processed by CtpA; processing is essential to allow assembly of the oxygen-evolving complex and thus photosynthetic growth.

It is found in the cellular thylakoid membrane. The catalysed reaction is 2 a plastoquinone + 4 hnu + 2 H2O = 2 a plastoquinol + O2. Photosystem II (PSII) is a light-driven water:plastoquinone oxidoreductase that uses light energy to abstract electrons from H(2)O, generating O(2) and a proton gradient subsequently used for ATP formation. It consists of a core antenna complex that captures photons, and an electron transfer chain that converts photonic excitation into a charge separation. The D1/D2 (PsbA/PsbD) reaction center heterodimer binds P680, the primary electron donor of PSII as well as several subsequent electron acceptors. In Synechocystis sp. (strain ATCC 27184 / PCC 6803 / Kazusa), this protein is Photosystem II protein D1 1.